Reading from the N-terminus, the 555-residue chain is Hydroxylamine reductase (555 aa).

The [4Fe-4S] cluster site is built by Cys5, Cys8, Cys17, and Cys23. His248, Glu272, Cys316, Cys408, Cys436, Cys461, Glu496, and Lys498 together coordinate hybrid [4Fe-2O-2S] cluster. At Cys408 the chain carries Cysteine persulfide.

It belongs to the HCP family. [4Fe-4S] cluster serves as cofactor. It depends on hybrid [4Fe-2O-2S] cluster as a cofactor.

It is found in the cytoplasm. The catalysed reaction is A + NH4(+) + H2O = hydroxylamine + AH2 + H(+). Its function is as follows. Catalyzes the reduction of hydroxylamine to form NH(3) and H(2)O. This Natranaerobius thermophilus (strain ATCC BAA-1301 / DSM 18059 / JW/NM-WN-LF) protein is Hydroxylamine reductase.